A 182-amino-acid chain; its full sequence is UPF0397 protein SAG1634 (182 aa).

The next 5 helical transmembrane spans lie at 9–29 (VVAT…VNIP), 42–62 (AVLA…TGFI), 74–94 (SPWW…GFFA), 109–129 (LLLF…VVAP), and 148–168 (FLSS…LLLA).

Belongs to the UPF0397 family.

The protein localises to the cell membrane. This Streptococcus agalactiae serotype V (strain ATCC BAA-611 / 2603 V/R) protein is UPF0397 protein SAG1634.